A 333-amino-acid chain; its full sequence is Transcription initiation factor IIB (333 aa).

Residues 33–64 (EVYRCPICGNDKFIYNYERGEVVCIVCGAVVQ) form a TFIIB-type zinc finger. The Zn(2+) site is built by Cys37, Cys40, Cys56, and Cys59. A run of 2 repeats spans residues 149–232 (QELE…LREL) and 243–324 (LYIS…ELAK).

Belongs to the TFIIB family.

Its function is as follows. Stabilizes TBP binding to an archaeal box-A promoter. Also responsible for recruiting RNA polymerase II to the pre-initiation complex (DNA-TBP-TFIIB). The protein is Transcription initiation factor IIB of Pyrobaculum neutrophilum (strain DSM 2338 / JCM 9278 / NBRC 100436 / V24Sta) (Thermoproteus neutrophilus).